We begin with the raw amino-acid sequence, 160 residues long: SsrA-binding protein (160 aa).

Belongs to the SmpB family.

The protein resides in the cytoplasm. Functionally, required for rescue of stalled ribosomes mediated by trans-translation. Binds to transfer-messenger RNA (tmRNA), required for stable association of tmRNA with ribosomes. tmRNA and SmpB together mimic tRNA shape, replacing the anticodon stem-loop with SmpB. tmRNA is encoded by the ssrA gene; the 2 termini fold to resemble tRNA(Ala) and it encodes a 'tag peptide', a short internal open reading frame. During trans-translation Ala-aminoacylated tmRNA acts like a tRNA, entering the A-site of stalled ribosomes, displacing the stalled mRNA. The ribosome then switches to translate the ORF on the tmRNA; the nascent peptide is terminated with the 'tag peptide' encoded by the tmRNA and targeted for degradation. The ribosome is freed to recommence translation, which seems to be the essential function of trans-translation. The sequence is that of SsrA-binding protein from Nocardia farcinica (strain IFM 10152).